A 247-amino-acid polypeptide reads, in one-letter code: E3 ubiquitin ligase TRIM40 (247 aa).

An RING-type zinc finger spans residues Cys-12 to Arg-55. Residues Gly-64 to Ile-105 form a B box-type zinc finger. Residues Cys-69, His-72, Cys-91, and His-97 each coordinate Zn(2+). Residues His-111–Trp-148 adopt a coiled-coil conformation.

This sequence belongs to the TRIM/RBCC family. In terms of assembly, interacts with NEDD8.

It carries out the reaction S-ubiquitinyl-[E2 ubiquitin-conjugating enzyme]-L-cysteine + [acceptor protein]-L-lysine = [E2 ubiquitin-conjugating enzyme]-L-cysteine + N(6)-ubiquitinyl-[acceptor protein]-L-lysine.. Its function is as follows. E3 ubiquitin-protein ligase that plays a role in the limitation of the innate immune response. Mediates inhibition of the RLR signaling pathway by ubiquitinating RIGI and IFIH1 receptors, leading to their proteasomal degradation. Also promotes the neddylation of IKBKG/NEMO, stabilizing NFKBIA, and thereby inhibiting of NF-kappa-B nuclear translocation and activation. This chain is E3 ubiquitin ligase TRIM40 (Trim40), found in Rattus norvegicus (Rat).